The chain runs to 45 residues: Non-specific lipid-transfer protein (45 aa).

It belongs to the plant LTP family. Expressed in pollen.

Functionally, plant non-specific lipid-transfer proteins transfer phospholipids as well as galactolipids across membranes. May play a role in wax or cutin deposition in the cell walls of expanding epidermal cells and certain secretory tissues. This chain is Non-specific lipid-transfer protein, found in Broussonetia papyrifera (Paper mulberry).